The sequence spans 156 residues: Transcriptional repressor NrdR (156 aa).

The segment at 3 to 34 is a zinc-finger region; that stretch reads CPKCSSTHSRVVDSRHADDANAIRRRRECENC. The ATP-cone domain maps to 49 to 139; that stretch reads LIVVKKDGTR…VYKEFKDVDQ (91 aa).

It belongs to the NrdR family. It depends on Zn(2+) as a cofactor.

Functionally, negatively regulates transcription of bacterial ribonucleotide reductase nrd genes and operons by binding to NrdR-boxes. This chain is Transcriptional repressor NrdR, found in Staphylococcus haemolyticus (strain JCSC1435).